We begin with the raw amino-acid sequence, 473 residues long: Digalactosyldiacylglycerol synthase 2, chloroplastic (473 aa).

Interaction with the membrane lipid bilayer stretches follow at residues 130-148 (LTWF…YVIG) and 227-245 (QPFT…SKGY).

The protein belongs to the glycosyltransferase group 1 family. Glycosyltransferase 4 subfamily. In terms of tissue distribution, expressed in leaves, flowers and roots, but not in stems and siliques.

It localises to the plastid. Its subcellular location is the chloroplast outer membrane. The catalysed reaction is a 1,2-diacyl-3-O-(beta-D-galactosyl)-sn-glycerol + UDP-alpha-D-galactose = a 1,2-diacyl-3-O-[alpha-D-galactosyl-(1-&gt;6)-beta-D-galactosyl]-sn-glycerol + UDP + H(+). Stimulated by anionic phospholipids. Functionally, involved in the synthesis of diacylglycerol galactolipids that are specifically found in thylakoid membranes. Specific for alpha-glycosidic linkages. During phosphate shortage, involved in the biosynthesis of digalactosyldiacylglycerol (DGDG) which rescues the limitation of phospholipids. The polypeptide is Digalactosyldiacylglycerol synthase 2, chloroplastic (Arabidopsis thaliana (Mouse-ear cress)).